The following is a 671-amino-acid chain: MESIEQQLTELRTTLRHHEYLYHVMDAPEIPDAEYDRLMRELRELETKHPELITPDSPTQRVGAAPLAAFSQIRHEVPMLSLDNVFDEESFLAFNKRVQDRLKSNEKVTWCCELKLDGLAVSILYENGVLVSAATRGDGTTGEDITSNVRTIRAIPLKLHGENIPARLEVRGEVFLPQAGFEKINEDARRTGGKVFANPRNAAAGSLRQLDPRITAKRPLTFFCYGVGVLEGGELPDTHLGRLLQFKKWGLPVSDRVTLCESAEEVLAFYHKVEEDRPTLGFDIDGVVIKVNSLAQQEQLGFVARAPRWAVAFKFPAQEQMTFVRDVEFQVGRTGAITPVARLEPVHVAGVLVSNATLHNADEIERLGLRIGDKVVIRRAGDVIPQVVNVVLSERPEDTREVVFPTHCPVCGSDVERVEGEAVARCTGGLICGAQRKESLKHFVSRRAMDVDGMGDKIIDQLVEKEYVHTPADLFKLTAGKLTGLERMGPKSAQNVVNALEKAKETTFARFLYALGIREVGEATAAGLAAYFGTLEALEAASIEELQKVPDVGIVVASHVHNFFAEESNRNVISELLAEGVHWPAPVVINAEEIDSPFAGKTVVLTGSLSQMSRDDAKARLVELGAKVAGSVSKKTDLVIAGEAAGSKLAKAQELGIEVIDETEMLRLLGS.

NAD(+)-binding positions include 32 to 36 (DAEYD), 81 to 82 (SL), and Glu-113. Lys-115 (N6-AMP-lysine intermediate) is an active-site residue. NAD(+) contacts are provided by Arg-136, Glu-173, Lys-290, and Lys-314. Zn(2+) contacts are provided by Cys-408, Cys-411, Cys-426, and Cys-432. Residues 593-671 (EIDSPFAGKT…ETEMLRLLGS (79 aa)) form the BRCT domain.

The protein belongs to the NAD-dependent DNA ligase family. LigA subfamily. The cofactor is Mg(2+). Requires Mn(2+) as cofactor.

It catalyses the reaction NAD(+) + (deoxyribonucleotide)n-3'-hydroxyl + 5'-phospho-(deoxyribonucleotide)m = (deoxyribonucleotide)n+m + AMP + beta-nicotinamide D-nucleotide.. Functionally, DNA ligase that catalyzes the formation of phosphodiester linkages between 5'-phosphoryl and 3'-hydroxyl groups in double-stranded DNA using NAD as a coenzyme and as the energy source for the reaction. It is essential for DNA replication and repair of damaged DNA. The polypeptide is DNA ligase (Escherichia fergusonii (strain ATCC 35469 / DSM 13698 / CCUG 18766 / IAM 14443 / JCM 21226 / LMG 7866 / NBRC 102419 / NCTC 12128 / CDC 0568-73)).